The chain runs to 100 residues: Integration host factor subunit alpha (100 aa).

Positions 53–72 (FDLRDKRQRPGRNPKTGEEI) are disordered.

It belongs to the bacterial histone-like protein family. Heterodimer of an alpha and a beta chain.

In terms of biological role, this protein is one of the two subunits of integration host factor, a specific DNA-binding protein that functions in genetic recombination as well as in transcriptional and translational control. The sequence is that of Integration host factor subunit alpha from Stutzerimonas stutzeri (strain A1501) (Pseudomonas stutzeri).